The chain runs to 419 residues: Probable serine/threonine-protein kinase DDB_G0290859 (419 aa).

The 348-residue stretch at 40–387 folds into the Protein kinase domain; it reads YDIISTIGSG…ASTIKKHPFF (348 aa). ATP-binding positions include 46 to 54 and Lys-69; that span reads IGSGSYGEV. The Proton acceptor role is filled by Asp-173. An AGC-kinase C-terminal domain is found at 388-419; that stretch reads EGINWEEMANFNVEPPFKPTLSSDDDISYFTN.

This sequence belongs to the protein kinase superfamily. AGC Ser/Thr protein kinase family.

It catalyses the reaction L-seryl-[protein] + ATP = O-phospho-L-seryl-[protein] + ADP + H(+). It carries out the reaction L-threonyl-[protein] + ATP = O-phospho-L-threonyl-[protein] + ADP + H(+). This Dictyostelium discoideum (Social amoeba) protein is Probable serine/threonine-protein kinase DDB_G0290859.